A 243-amino-acid polypeptide reads, in one-letter code: Probable HTH-type transcriptional regulator GfsR (243 aa).

The interval 154 to 179 is disordered; it reads AAVARPDTSGSATGRTGDSSPSLALS. A compositionally biased stretch (polar residues) spans 161–178; sequence TSGSATGRTGDSSPSLAL. The HTH luxR-type domain occupies 171-236; sequence DSSPSLALSP…QALLRWLGHP (66 aa). Positions 195–214 form a DNA-binding region, H-T-H motif; sequence VREIAVEMRLAEKTVRNYLS.

Its pathway is antibiotic biosynthesis. Probable DNA-binding protein that contributes to the control of expression of the biosynthesis operon of the 16-membered macrolide antibiotics FD-891 and FD-892. Might be a member of a two-component regulatory system; the putative sensor kinase gene is unknown. In Streptomyces halstedii, this protein is Probable HTH-type transcriptional regulator GfsR.